A 208-amino-acid polypeptide reads, in one-letter code: MKILFDFLPIALFFGMFKYAEGHKDWAAGLATDWLGFMVSGGVVGPAEAPVLLATVVVIVATLAQILWLKARGRKVDTMLWVSLALVTALGSATIYFHSESFIKWKPTVLYWVMGASLLVGELVFKKNGIKSLMGAQMSLPDAVWRKVNFSWVAFFAAMGCLNLWVAFNFPTSTWVNFKLFGGMGLMLVFVLAQAFFLNKHIKPDTTS.

The next 5 helical transmembrane spans lie at 49–69, 78–98, 105–125, 150–170, and 178–198; these read APVL…ILWL, TMLW…IYFH, WKPT…ELVF, FSWV…AFNF, and FKLF…AFFL.

This sequence belongs to the YciB family.

Its subcellular location is the cell inner membrane. In terms of biological role, plays a role in cell envelope biogenesis, maintenance of cell envelope integrity and membrane homeostasis. The protein is Inner membrane-spanning protein YciB of Polaromonas naphthalenivorans (strain CJ2).